Consider the following 608-residue polypeptide: Aspartate--tRNA(Asp/Asn) ligase (608 aa).

Glu-187 serves as a coordination point for L-aspartate. Positions 211–214 (QQFK) are aspartate. Residues Arg-233 and His-461 each coordinate L-aspartate. Position 233 to 235 (233 to 235 (RDE)) interacts with ATP. Residue Glu-495 coordinates ATP. Arg-502 provides a ligand contact to L-aspartate. 547–550 (GLDR) contacts ATP.

This sequence belongs to the class-II aminoacyl-tRNA synthetase family. Type 1 subfamily. As to quaternary structure, homodimer.

The protein localises to the cytoplasm. The catalysed reaction is tRNA(Asx) + L-aspartate + ATP = L-aspartyl-tRNA(Asx) + AMP + diphosphate. Its function is as follows. Aspartyl-tRNA synthetase with relaxed tRNA specificity since it is able to aspartylate not only its cognate tRNA(Asp) but also tRNA(Asn). Reaction proceeds in two steps: L-aspartate is first activated by ATP to form Asp-AMP and then transferred to the acceptor end of tRNA(Asp/Asn). The chain is Aspartate--tRNA(Asp/Asn) ligase from Chlorobium phaeobacteroides (strain BS1).